Here is a 119-residue protein sequence, read N- to C-terminus: Large ribosomal subunit protein bL20 (119 aa).

It belongs to the bacterial ribosomal protein bL20 family.

Binds directly to 23S ribosomal RNA and is necessary for the in vitro assembly process of the 50S ribosomal subunit. It is not involved in the protein synthesizing functions of that subunit. The polypeptide is Large ribosomal subunit protein bL20 (Acinetobacter baylyi (strain ATCC 33305 / BD413 / ADP1)).